Here is a 141-residue protein sequence, read N- to C-terminus: Mitochondrial import inner membrane translocase subunit Tim16 (141 aa).

Disordered regions lie at residues 34–53 (AARR…SNLR) and 108–141 (LDHE…RQRR). A J-like region spans residues 60 to 113 (EAKQILNIDDPKNVDAITKNYEHLFQVNERSKGGSFYIQSKVFRAKERLDHEIK). The segment covering 108–118 (LDHEIKAHEQP) has biased composition (basic and acidic residues).

Belongs to the TIM16/PAM16 family. In terms of assembly, probable component of the PAM complex at least composed of a mitochondrial HSP70 protein, Roe1, TIM44, blp/TIM16 and TIM14. Associates with the TIM23 complex. In terms of tissue distribution, expressed in distinct cells in the embryonic and larval nervous system.

It is found in the mitochondrion inner membrane. Functionally, regulates ATP-dependent protein translocation into the mitochondrial matrix. Essential for larval development. This is Mitochondrial import inner membrane translocase subunit Tim16 (blp) from Drosophila melanogaster (Fruit fly).